We begin with the raw amino-acid sequence, 47 residues long: Delta-actitoxin-Axm1d (47 aa).

Cystine bridges form between Cys-4–Cys-44, Cys-6–Cys-34, and Cys-27–Cys-45.

It belongs to the sea anemone sodium channel inhibitory toxin family. Type I subfamily.

The protein resides in the secreted. Its subcellular location is the nematocyst. Binds specifically to voltage-gated sodium channels (Nav), thereby delaying their inactivation during signal transduction. Thus it strongly stimulates mammalian cardiac muscle contraction. The polypeptide is Delta-actitoxin-Axm1d (Anthopleura xanthogrammica (Giant green sea anemone)).